The sequence spans 217 residues: Cytidylate kinase (217 aa).

9–17 provides a ligand contact to ATP; that stretch reads GPSSSGKSS.

It belongs to the cytidylate kinase family. Type 1 subfamily.

The protein localises to the cytoplasm. The enzyme catalyses CMP + ATP = CDP + ADP. The catalysed reaction is dCMP + ATP = dCDP + ADP. The chain is Cytidylate kinase from Mycoplasma pneumoniae (strain ATCC 29342 / M129 / Subtype 1) (Mycoplasmoides pneumoniae).